A 187-amino-acid chain; its full sequence is Elongation factor P (187 aa).

The protein belongs to the elongation factor P family.

It localises to the cytoplasm. Its pathway is protein biosynthesis; polypeptide chain elongation. Functionally, involved in peptide bond synthesis. Stimulates efficient translation and peptide-bond synthesis on native or reconstituted 70S ribosomes in vitro. Probably functions indirectly by altering the affinity of the ribosome for aminoacyl-tRNA, thus increasing their reactivity as acceptors for peptidyl transferase. The sequence is that of Elongation factor P from Corynebacterium urealyticum (strain ATCC 43042 / DSM 7109).